Reading from the N-terminus, the 166-residue chain is Protein FAM163B (166 aa).

A helical membrane pass occupies residues Val-6 to Cys-26. Ser-40 is modified (phosphoserine).

Belongs to the FAM163 family.

It localises to the membrane. This Homo sapiens (Human) protein is Protein FAM163B (FAM163B).